Here is a 408-residue protein sequence, read N- to C-terminus: tRNA-specific 2-thiouridylase MnmA (408 aa).

ATP is bound by residues 27–34 (AMSGGVDS) and leucine 53. Residue cysteine 121 is the Nucleophile of the active site. The cysteines at positions 121 and 222 are disulfide-linked. An ATP-binding site is contributed by glycine 145. The segment at 172–174 (RDQ) is interaction with tRNA. Cysteine 222 acts as the Cysteine persulfide intermediate in catalysis.

The protein belongs to the MnmA/TRMU family.

It localises to the cytoplasm. It carries out the reaction S-sulfanyl-L-cysteinyl-[protein] + uridine(34) in tRNA + AH2 + ATP = 2-thiouridine(34) in tRNA + L-cysteinyl-[protein] + A + AMP + diphosphate + H(+). Functionally, catalyzes the 2-thiolation of uridine at the wobble position (U34) of tRNA, leading to the formation of s(2)U34. The chain is tRNA-specific 2-thiouridylase MnmA from Rhizobium etli (strain CIAT 652).